We begin with the raw amino-acid sequence, 120 residues long: uncharacterized protein (120 aa).

A helical transmembrane segment spans residues 22 to 44 (ITVASCIGAAQGALFSIASALLL). Asn-114 is a glycosylation site (N-linked (GlcNAc...) asparagine).

It localises to the membrane. This is an uncharacterized protein from Saccharomyces cerevisiae (strain ATCC 204508 / S288c) (Baker's yeast).